The sequence spans 273 residues: 4-hydroxy-tetrahydrodipicolinate reductase (273 aa).

NAD(+) is bound by residues 12–17 (GAGGRM) and E38. R39 lines the NADP(+) pocket. Residues 102-104 (GTT) and 126-129 (AANF) each bind NAD(+). Catalysis depends on H159, which acts as the Proton donor/acceptor. H160 lines the (S)-2,3,4,5-tetrahydrodipicolinate pocket. K163 acts as the Proton donor in catalysis. 169–170 (GT) lines the (S)-2,3,4,5-tetrahydrodipicolinate pocket.

This sequence belongs to the DapB family. Homotetramer.

It localises to the cytoplasm. It catalyses the reaction (S)-2,3,4,5-tetrahydrodipicolinate + NAD(+) + H2O = (2S,4S)-4-hydroxy-2,3,4,5-tetrahydrodipicolinate + NADH + H(+). The enzyme catalyses (S)-2,3,4,5-tetrahydrodipicolinate + NADP(+) + H2O = (2S,4S)-4-hydroxy-2,3,4,5-tetrahydrodipicolinate + NADPH + H(+). Its pathway is amino-acid biosynthesis; L-lysine biosynthesis via DAP pathway; (S)-tetrahydrodipicolinate from L-aspartate: step 4/4. In terms of biological role, catalyzes the conversion of 4-hydroxy-tetrahydrodipicolinate (HTPA) to tetrahydrodipicolinate. The chain is 4-hydroxy-tetrahydrodipicolinate reductase from Salmonella enteritidis PT4 (strain P125109).